The chain runs to 139 residues: Ribosome-binding factor A (139 aa).

The tract at residues 120-139 (PENLLAVEDNTDEDDESFSE) is disordered. Acidic residues predominate over residues 128–139 (DNTDEDDESFSE).

This sequence belongs to the RbfA family. Monomer. Binds 30S ribosomal subunits, but not 50S ribosomal subunits or 70S ribosomes.

It is found in the cytoplasm. In terms of biological role, one of several proteins that assist in the late maturation steps of the functional core of the 30S ribosomal subunit. Associates with free 30S ribosomal subunits (but not with 30S subunits that are part of 70S ribosomes or polysomes). Required for efficient processing of 16S rRNA. May interact with the 5'-terminal helix region of 16S rRNA. This Nostoc punctiforme (strain ATCC 29133 / PCC 73102) protein is Ribosome-binding factor A.